The chain runs to 583 residues: Radixin (583 aa).

The region spanning 5-295 (INVRVTTMDA…GNHELYMRRR (291 aa)) is the FERM domain. A 1,2-diacyl-sn-glycero-3-phospho-(1D-myo-inositol) is bound by residues 60–63 (KLNK) and Lys278. Disordered regions lie at residues 310 to 336 (REEK…AEKE) and 436 to 527 (KKKE…VKKQ). Composition is skewed to basic and acidic residues over residues 436–447 (KKKEEEASEWQH) and 455–464 (DLEKTKEELK). Over residues 469–480 (APPPPPPPPVIP) the composition is skewed to pro residues. Basic and acidic residues-rich tracts occupy residues 483 to 492 (ENEHDEHDEN) and 506 to 525 (MNHR…ERVK).

It is found in the cell membrane. Its subcellular location is the cytoplasm. The protein localises to the cytoskeleton. Its function is as follows. Probably plays a crucial role in the binding of the barbed end of actin filaments to the plasma membrane. The sequence is that of Radixin (RDX) from Gallus gallus (Chicken).